Reading from the N-terminus, the 110-residue chain is Transmembrane protein 233 (110 aa).

The segment at Met1–Ile32 is disordered. Residues Met1–Thr42 lie on the Cytoplasmic side of the membrane. The segment covering Tyr22–Ile32 has biased composition (acidic residues). An intramembrane region (helical) is located at residues Ile43–Met63. The Cytoplasmic segment spans residues Ser64 to Trp85. A helical membrane pass occupies residues Val86–Phe106. Topologically, residues Ser107–Pro110 are extracellular.

It belongs to the CD225/Dispanin family. Interacts with the giant stinging tree toxin ExTxA (P0DQP3). Interacts with Nav1.7/SCN9A. Interacts with Nav1.1/SCN1A, Nav1.2/SCN2A, Nav1.3/SCN3A, Nav1.4/SCN4A, Nav1.5/SCN5A, and Nav1.6/SCN8A. In terms of tissue distribution, probably expressed in nociceptive neurons. Detected in dorsal root ganglion neurons.

The protein resides in the membrane. Functionally, probable accessory protein of voltage-gated sodium channels. In Mus musculus (Mouse), this protein is Transmembrane protein 233.